Here is a 542-residue protein sequence, read N- to C-terminus: Glutamyl-tRNA reductase 2, chloroplastic (542 aa).

Substrate-binding positions include 142–145, Ser-202, 207–209, and Gln-213; these read TCNR and EGQ. Cys-143 serves as the catalytic Nucleophile. 284-289 contacts NADP(+); that stretch reads GAGKMG.

It belongs to the glutamyl-tRNA reductase family. Found in all tissues examined.

Its subcellular location is the plastid. It localises to the chloroplast. The enzyme catalyses (S)-4-amino-5-oxopentanoate + tRNA(Glu) + NADP(+) = L-glutamyl-tRNA(Glu) + NADPH + H(+). It functions in the pathway porphyrin-containing compound metabolism; protoporphyrin-IX biosynthesis; 5-aminolevulinate from L-glutamyl-tRNA(Glu): step 1/2. Catalyzes the NADPH-dependent reduction of glutamyl-tRNA(Glu) to glutamate 1-semialdehyde (GSA). This chain is Glutamyl-tRNA reductase 2, chloroplastic (HEMA2), found in Cucumis sativus (Cucumber).